A 128-amino-acid chain; its full sequence is Sulfurtransferase TusD (128 aa).

Cysteine 78 (cysteine persulfide intermediate) is an active-site residue.

This sequence belongs to the DsrE/TusD family. Heterohexamer, formed by a dimer of trimers. The hexameric TusBCD complex contains 2 copies each of TusB, TusC and TusD. The TusBCD complex interacts with TusE.

It localises to the cytoplasm. Its function is as follows. Part of a sulfur-relay system required for 2-thiolation of 5-methylaminomethyl-2-thiouridine (mnm(5)s(2)U) at tRNA wobble positions. Accepts sulfur from TusA and transfers it in turn to TusE. The sequence is that of Sulfurtransferase TusD from Escherichia fergusonii (strain ATCC 35469 / DSM 13698 / CCUG 18766 / IAM 14443 / JCM 21226 / LMG 7866 / NBRC 102419 / NCTC 12128 / CDC 0568-73).